The following is a 45-amino-acid chain: Large ribosomal subunit protein bL34 (45 aa).

Belongs to the bacterial ribosomal protein bL34 family.

The polypeptide is Large ribosomal subunit protein bL34 (Salinispora tropica (strain ATCC BAA-916 / DSM 44818 / JCM 13857 / NBRC 105044 / CNB-440)).